Reading from the N-terminus, the 386-residue chain is AT-hook motif nuclear-localized protein 8 (386 aa).

2 disordered regions span residues 1–175 and 303–372; these read MDSR…LGGT and KQSS…LHPH. The segment covering 54–70 has biased composition (low complexity); it reads QQQSQTFHQQQQQQMDQ. Basic residues predominate over residues 101–110; the sequence is VKKKRGRPRK. The Bipartite nuclear localization signal motif lies at 102-110; sequence KKKRGRPRK. Positions 102-114 form a DNA-binding region, a.T hook 1; that stretch reads KKKRGRPRKYTPD. Positions 126–135 are enriched in polar residues; the sequence is PLLSAASNSY. The segment covering 136–147 has biased composition (gly residues); sequence GEGGVGDSGGNG. A DNA-binding region (a.T hook 2) is located at residues 155–167; it reads KRNRGRPPGSSKK. One can recognise a PPC domain in the interval 174 to 316; sequence GTSGVGFTPH…VNIARGQNPE (143 aa). Composition is skewed to low complexity over residues 328–337 and 361–372; these read GSVSQGPSSE and QQQQQQQPLHPH.

The protein resides in the nucleus. In terms of biological role, transcription factor that specifically binds AT-rich DNA sequences related to the nuclear matrix attachment regions (MARs). The chain is AT-hook motif nuclear-localized protein 8 from Arabidopsis thaliana (Mouse-ear cress).